Reading from the N-terminus, the 177-residue chain is Large ribosomal subunit protein uL10 (177 aa).

This sequence belongs to the universal ribosomal protein uL10 family. As to quaternary structure, part of the ribosomal stalk of the 50S ribosomal subunit. The N-terminus interacts with L11 and the large rRNA to form the base of the stalk. The C-terminus forms an elongated spine to which L12 dimers bind in a sequential fashion forming a multimeric L10(L12)X complex.

Forms part of the ribosomal stalk, playing a central role in the interaction of the ribosome with GTP-bound translation factors. The polypeptide is Large ribosomal subunit protein uL10 (Legionella pneumophila (strain Corby)).